A 906-amino-acid polypeptide reads, in one-letter code: Protein translocase subunit SecA (906 aa).

Residues Q86, 104–108 (GEGKT), and D499 contribute to the ATP site. Residues 862 to 886 (KPVVSRIDPKDRNPDDPTSWGRVSR) form a disordered region. Positions 890, 892, 901, and 902 each coordinate Zn(2+).

This sequence belongs to the SecA family. Monomer and homodimer. Part of the essential Sec protein translocation apparatus which comprises SecA, SecYEG and auxiliary proteins SecDF-YajC and YidC. Zn(2+) is required as a cofactor.

The protein localises to the cell inner membrane. The protein resides in the cytoplasm. The enzyme catalyses ATP + H2O + cellular proteinSide 1 = ADP + phosphate + cellular proteinSide 2.. Functionally, part of the Sec protein translocase complex. Interacts with the SecYEG preprotein conducting channel. Has a central role in coupling the hydrolysis of ATP to the transfer of proteins into and across the cell membrane, serving both as a receptor for the preprotein-SecB complex and as an ATP-driven molecular motor driving the stepwise translocation of polypeptide chains across the membrane. This chain is Protein translocase subunit SecA, found in Rickettsia africae (strain ESF-5).